The primary structure comprises 175 residues: Translation initiation factor IF-3 (175 aa).

It belongs to the IF-3 family. In terms of assembly, monomer.

Its subcellular location is the cytoplasm. Its function is as follows. IF-3 binds to the 30S ribosomal subunit and shifts the equilibrium between 70S ribosomes and their 50S and 30S subunits in favor of the free subunits, thus enhancing the availability of 30S subunits on which protein synthesis initiation begins. This Staphylococcus aureus (strain MRSA252) protein is Translation initiation factor IF-3.